Consider the following 296-residue polypeptide: Heme oxygenase 1 (296 aa).

The Cytoplasmic portion of the chain corresponds to 1 to 273 (METSQPHNAE…RMQADMLTTS (273 aa)). Lys21, His28, Tyr137, and Arg186 together coordinate heme b. Residues 231–264 (GHAVQPKAELRTRSVNKSHENSPAAGKESERTSR) are disordered. Over residues 238–250 (AELRTRSVNKSHE) the composition is skewed to basic and acidic residues. The helical; Anchor for type IV membrane protein transmembrane segment at 274 to 296 (PLVRWLLALGFIATTVAVGLFAM) threads the bilayer.

It belongs to the heme oxygenase family. In terms of assembly, homodimer and higher order homooligomer. Oligomerization is crucial for its stability and function in the endoplasmic reticulum. A soluble form arises by proteolytic removal of the membrane anchor.

It is found in the endoplasmic reticulum membrane. The catalysed reaction is heme b + 3 reduced [NADPH--hemoprotein reductase] + 3 O2 = biliverdin IXalpha + CO + Fe(2+) + 3 oxidized [NADPH--hemoprotein reductase] + 3 H2O + H(+). Inhibited by metalloporphyrins in the following order of decreasing potency: tin mesoporphyrin &gt; tin protoporphyrin &gt; zinc protoporphyrin &gt; manganese protoporphyrin &gt; cobalt protoporphyrin. Functionally, catalyzes the oxidative cleavage of heme at the alpha-methene bridge carbon, released as carbon monoxide (CO), to generate biliverdin IXalpha, while releasing the central heme iron chelate as ferrous iron. Affords protection against programmed cell death and this cytoprotective effect relies on its ability to catabolize free heme and prevent it from sensitizing cells to undergo apoptosis. Its function is as follows. Catalyzes the oxidative cleavage of heme at the alpha-methene bridge carbon, released as carbon monoxide (CO), to generate biliverdin IXalpha, while releasing the central heme iron chelate as ferrous iron. In Gallus gallus (Chicken), this protein is Heme oxygenase 1 (HMOX1).